A 122-amino-acid chain; its full sequence is Small ribosomal subunit protein uS13 (122 aa).

A disordered region spans residues 98–122; that stretch reads VRGQRTKTNARTRKGKRKTVGAKAK.

Belongs to the universal ribosomal protein uS13 family. As to quaternary structure, part of the 30S ribosomal subunit. Forms a loose heterodimer with protein S19. Forms two bridges to the 50S subunit in the 70S ribosome.

Its function is as follows. Located at the top of the head of the 30S subunit, it contacts several helices of the 16S rRNA. In the 70S ribosome it contacts the 23S rRNA (bridge B1a) and protein L5 of the 50S subunit (bridge B1b), connecting the 2 subunits; these bridges are implicated in subunit movement. Contacts the tRNAs in the A and P-sites. The polypeptide is Small ribosomal subunit protein uS13 (Nautilia profundicola (strain ATCC BAA-1463 / DSM 18972 / AmH)).